The sequence spans 172 residues: MAEQKSSYGYEELLACGRGEMFGPGNAQLPLPPMLMIHRITEISETGGAFDKGYIRAEYDVRPDDWYFPCHFQGNPIMPGCLGLDGMWQLTGFFLGWLGEPGRGMALSTGEVKFKGMVRPHTKLLEYGIDFKRVMRGRLVLGTADGWLKADGELIYQATDLRVGLSKEGSAQ.

His-71 is a catalytic residue.

The protein belongs to the thioester dehydratase family. FabA subfamily. Homodimer.

It localises to the cytoplasm. It carries out the reaction a (3R)-hydroxyacyl-[ACP] = a (2E)-enoyl-[ACP] + H2O. It catalyses the reaction (3R)-hydroxydecanoyl-[ACP] = (2E)-decenoyl-[ACP] + H2O. The enzyme catalyses (2E)-decenoyl-[ACP] = (3Z)-decenoyl-[ACP]. It participates in lipid metabolism; fatty acid biosynthesis. In terms of biological role, necessary for the introduction of cis unsaturation into fatty acids. Catalyzes the dehydration of (3R)-3-hydroxydecanoyl-ACP to E-(2)-decenoyl-ACP and then its isomerization to Z-(3)-decenoyl-ACP. Can catalyze the dehydratase reaction for beta-hydroxyacyl-ACPs with saturated chain lengths up to 16:0, being most active on intermediate chain length. In Brucella abortus (strain S19), this protein is 3-hydroxydecanoyl-[acyl-carrier-protein] dehydratase.